The primary structure comprises 1802 residues: Protein TIC 214 (1802 aa).

The next 6 membrane-spanning stretches (helical) occupy residues 19–39 (IINSVVVVGLYYGFLTTFSIG), 68–88 (FIAGQLMMFISIYYAPLHLAL), 91–111 (PHTITVLALPYLLFHFFWNNH), 133–153 (VFLNNLIFQLFNHFILPSSML), 176–196 (VGWLIGHILFMKWVGLVLVWI), and 227–247 (IFSILLFITCVYYLGRIPSPI).

Belongs to the TIC214 family. Part of the Tic complex.

The protein localises to the plastid. It localises to the chloroplast inner membrane. In terms of biological role, involved in protein precursor import into chloroplasts. May be part of an intermediate translocation complex acting as a protein-conducting channel at the inner envelope. This Nasturtium officinale (Watercress) protein is Protein TIC 214.